The chain runs to 366 residues: tRNA/tmRNA (uracil-C(5))-methyltransferase (366 aa).

5 residues coordinate S-adenosyl-L-methionine: glutamine 190, tyrosine 218, asparagine 223, glutamate 239, and aspartate 299. Cysteine 324 functions as the Nucleophile in the catalytic mechanism. Residue glutamate 358 is the Proton acceptor of the active site.

Belongs to the class I-like SAM-binding methyltransferase superfamily. RNA M5U methyltransferase family. TrmA subfamily.

It catalyses the reaction uridine(54) in tRNA + S-adenosyl-L-methionine = 5-methyluridine(54) in tRNA + S-adenosyl-L-homocysteine + H(+). It carries out the reaction uridine(341) in tmRNA + S-adenosyl-L-methionine = 5-methyluridine(341) in tmRNA + S-adenosyl-L-homocysteine + H(+). Its function is as follows. Dual-specificity methyltransferase that catalyzes the formation of 5-methyluridine at position 54 (m5U54) in all tRNAs, and that of position 341 (m5U341) in tmRNA (transfer-mRNA). The protein is tRNA/tmRNA (uracil-C(5))-methyltransferase of Escherichia coli O81 (strain ED1a).